A 151-amino-acid polypeptide reads, in one-letter code: Large-conductance mechanosensitive channel (151 aa).

The next 2 helical transmembrane spans lie at 12–32 (GNIVDLAVAVVIGTAFTALVT) and 71–91 (VLLSAAINFFLIAFAVYFLVV). A disordered region spans residues 122 to 151 (AQTNGDSPGRHGGRGTPSPTDGPLASTESQ).

The protein belongs to the MscL family. In terms of assembly, homopentamer.

The protein localises to the cell membrane. In terms of biological role, channel that opens in response to stretch forces in the membrane lipid bilayer. May participate in the regulation of osmotic pressure changes within the cell. This is Large-conductance mechanosensitive channel from Mycobacterium bovis (strain BCG / Pasteur 1173P2).